The following is a 194-amino-acid chain: Probable GTP-binding protein EngB (194 aa).

In terms of domain architecture, EngB-type G spans 22 to 194 (DLPEYALAGR…AWQFIKEGME (173 aa)). Residues 30-37 (GRSNVGKS), 57-61 (GKTQT), 75-78 (DVPG), 142-145 (TKAD), and 174-176 (FSS) contribute to the GTP site. Mg(2+) contacts are provided by Ser-37 and Thr-59.

This sequence belongs to the TRAFAC class TrmE-Era-EngA-EngB-Septin-like GTPase superfamily. EngB GTPase family. The cofactor is Mg(2+).

In terms of biological role, necessary for normal cell division and for the maintenance of normal septation. The polypeptide is Probable GTP-binding protein EngB (Listeria welshimeri serovar 6b (strain ATCC 35897 / DSM 20650 / CCUG 15529 / CIP 8149 / NCTC 11857 / SLCC 5334 / V8)).